The following is an 843-amino-acid chain: F-box only protein 11 (843 aa).

Residues 1–63 form a disordered region; that stretch reads MVAEESGPGA…RVSGKSQDLS (63 aa). Residues 30–45 show a composition bias toward polar residues; sequence PTKNSMEGASTSTTEN. The 47-residue stretch at 69 to 115 folds into the F-box domain; the sequence is QYLQEKLPDEVVLKIFSYLLEQDLCRAACVCKRFSELANDPILWKRL. PbH1 repeat units lie at residues 311–333, 334–356, 357–379, 380–402, 403–425, 426–448, 449–471, 472–494, 495–517, 518–540, 541–563, 564–586, 587–609, 610–632, 633–655, 656–678, 679–701, 702–724, and 725–746; these read GACP…YITD, HAQG…WVKN, HGNP…FTFD, HGMG…EVKA, YANP…YVHE, KGRG…WITS, NSDP…YIFG, DGRG…QIRT, NSCP…YVHE, KGQG…WVTT, GSTP…YFYD, NGHG…QIRT, GSNP…LVYN, SGLG…WIKT, DSNP…CIFN, GGRG…LIST, NSHP…EITN, HATA…FLAS, and GVNV…EKAV. A UBR-type zinc finger spans residues 749–820; it reads GQCLYKISSY…LSNPCTLAGE (72 aa).

In terms of assembly, component of the SCF(FBXO11) complex consisting of CUL1, RBX1, SKP1 and FBXO11. Interacts with CIITA.

It localises to the nucleus. The protein localises to the chromosome. It participates in protein modification; protein ubiquitination. Functionally, substrate recognition component of a SCF (SKP1-CUL1-F-box protein) E3 ubiquitin-protein ligase complex which mediates the ubiquitination and subsequent proteasomal degradation of target proteins, such as DTL/CDT2, BCL6, SNAI1 and PRDM1/BLIMP1. The SCF(FBXO11) complex mediates ubiquitination and degradation of BCL6, thereby playing a role in the germinal center B-cells terminal differentiation toward memory B-cells and plasma cells. The SCF(FBXO11) complex also mediates ubiquitination and degradation of DTL, an important step for the regulation of TGF-beta signaling, cell migration and the timing of the cell-cycle progression and exit. The SCF(FBXO11) complex also catalyzes ubiquitination and degradation of GSK3B-phosphorylated SNAI1. Binds to and neddylates phosphorylated p53/TP53, inhibiting its transcriptional activity. Plays a role in the regulatiom of erythropoiesis but not myelopoiesis or megakaryopoiesis. Mechanistically, activates erythroid genes by mediating the degradation of BAHD1, a heterochromatin-associated protein that recruits corepressors to H3K27me3 marks. Participates in macrophage cell death and inflammation in response to bacterial toxins by regulating the expression of complement 5a receptor 1/C5AR1 and IL-1beta. Acts as a critical regulator to determine the level of MHC-II by mediating the recognition of degron at the P/S/T domain of CIITA leading to its ubiquitination and subsequent degradation via the proteasome. Participates in the antiviral repsonse by initiating the activation of TBK1-IRF3-IFN-I axis. Mediates the 'Lys-63'-linked ubiquitination of TRAF3 to strengthen the interaction between TRAF3 and TBK1. This Rattus norvegicus (Rat) protein is F-box only protein 11 (Fbxo11).